Reading from the N-terminus, the 271-residue chain is Formamidopyrimidine-DNA glycosylase (271 aa).

Residue Pro-2 is the Schiff-base intermediate with DNA of the active site. Glu-3 (proton donor) is an active-site residue. Lys-57 functions as the Proton donor; for beta-elimination activity in the catalytic mechanism. His-90, Arg-109, and Lys-151 together coordinate DNA. The segment at 236–270 adopts an FPG-type zinc-finger fold; sequence HVYGRGGETCTQCGHLLSEIKLGQRATVFCSLCQK. The Proton donor; for delta-elimination activity role is filled by Arg-260.

This sequence belongs to the FPG family. Monomer. The cofactor is Zn(2+).

The catalysed reaction is Hydrolysis of DNA containing ring-opened 7-methylguanine residues, releasing 2,6-diamino-4-hydroxy-5-(N-methyl)formamidopyrimidine.. It catalyses the reaction 2'-deoxyribonucleotide-(2'-deoxyribose 5'-phosphate)-2'-deoxyribonucleotide-DNA = a 3'-end 2'-deoxyribonucleotide-(2,3-dehydro-2,3-deoxyribose 5'-phosphate)-DNA + a 5'-end 5'-phospho-2'-deoxyribonucleoside-DNA + H(+). Its function is as follows. Involved in base excision repair of DNA damaged by oxidation or by mutagenic agents. Acts as a DNA glycosylase that recognizes and removes damaged bases. Has a preference for oxidized purines, such as 7,8-dihydro-8-oxoguanine (8-oxoG). Has AP (apurinic/apyrimidinic) lyase activity and introduces nicks in the DNA strand. Cleaves the DNA backbone by beta-delta elimination to generate a single-strand break at the site of the removed base with both 3'- and 5'-phosphates. This is Formamidopyrimidine-DNA glycosylase from Shewanella halifaxensis (strain HAW-EB4).